The following is an 87-amino-acid chain: MANIKSQIKRNKTNEKARLRNQAVRSAVRTEIRKFNAAIEAGDKDAAQAQLRTASRALDKAVTKGVFHINNAANKKSNMATAFNKLG.

Residues 1–22 (MANIKSQIKRNKTNEKARLRNQ) form a disordered region.

It belongs to the bacterial ribosomal protein bS20 family.

Functionally, binds directly to 16S ribosomal RNA. In Corynebacterium glutamicum (strain R), this protein is Small ribosomal subunit protein bS20.